The following is a 242-amino-acid chain: Host range factor p28 (242 aa).

In terms of domain architecture, KilA-N spans 21 to 131 (YIDEPNDIRL…QSILRGLVNW (111 aa)). The RING-type zinc-finger motif lies at 173–226 (CGICYEVVYSKRLENDRYFGLLDSCNHIFCITCINIWHRTRRETGASDNCPICR).

It belongs to the orthopoxvirus OPG021 family.

The protein resides in the host cytoplasm. The enzyme catalyses S-ubiquitinyl-[E2 ubiquitin-conjugating enzyme]-L-cysteine + [acceptor protein]-L-lysine = [E2 ubiquitin-conjugating enzyme]-L-cysteine + N(6)-ubiquitinyl-[acceptor protein]-L-lysine.. In terms of biological role, RING-finger E3 ubiquitin ligase which catalyzes the formation of both 'Lys-48'- and 'Lys-63'-linked polyubiquitin chains. Plays an important role in virulence by acting as an anti-apoptotic factor. The polypeptide is Host range factor p28 (OPG021) (Cowpox virus (strain Brighton Red) (CPV)).